A 145-amino-acid polypeptide reads, in one-letter code: MSWAPVLLMLFVYCTGCGPQPVLHQPPAMSSALGTTIRLTCTLRNDHDIGVYSVYWYQQRPGHPPRFLLRYFSQSDKSQGPQVPPRFSGSKDVARNRGYLSISELQPEDEAMYYCAMGARSSEKEEREREWEEEMEPTAARTRVP.

Residues 1–19 (MSWAPVLLMLFVYCTGCGP) form the signal peptide. The segment at 20–41 (QPVLHQPPAMSSALGTTIRLTC) is framework-1. One can recognise an Ig-like V-type domain in the interval 20 to 132 (QPVLHQPPAM…EKEEREREWE (113 aa)). Cys-41 and Cys-115 are joined by a disulfide. The tract at residues 42 to 56 (TLRNDHDIGVYSVYW) is complementarity-determining-1. The framework-2 stretch occupies residues 57–70 (YQQRPGHPPRFLLR). The complementarity-determining-2 stretch occupies residues 71–81 (YFSQSDKSQGP). Positions 82–115 (QVPPRFSGSKDVARNRGYLSISELQPEDEAMYYC) are framework-3. Positions 121–130 (SSEKEERERE) are enriched in basic and acidic residues. Residues 121–145 (SSEKEEREREWEEEMEPTAARTRVP) are disordered.

The protein belongs to the immunoglobulin superfamily. Interacts with IGLL1. Interacts with SYNV1/HRD1 (via N-terminus); this interaction leads to increased VPREB1 ubiquitination and degradation in pre-B cells, possibly through a lysosomal, not proteasomal, pathway. As to expression, only expressed by pre-B-cells.

It localises to the endoplasmic reticulum. Functionally, associates with the Ig-mu chain to form a molecular complex that is expressed on the surface of pre-B-cells. This complex presumably regulates Ig gene rearrangements in the early steps of B-cell differentiation. The sequence is that of Immunoglobulin iota chain (VPREB1) from Homo sapiens (Human).